Consider the following 177-residue polypeptide: Dual-action ribosomal maturation protein DarP (177 aa).

The disordered stretch occupies residues M1–D26.

It belongs to the DarP family.

It is found in the cytoplasm. Its function is as follows. Member of a network of 50S ribosomal subunit biogenesis factors which assembles along the 30S-50S interface, preventing incorrect 23S rRNA structures from forming. Promotes peptidyl transferase center (PTC) maturation. This chain is Dual-action ribosomal maturation protein DarP, found in Shewanella sp. (strain ANA-3).